The chain runs to 162 residues: NADH-quinone oxidoreductase subunit I (162 aa).

2 consecutive 4Fe-4S ferredoxin-type domains span residues 53-83 and 93-122; these read LRRY…IEPE and RRYD…EGPN. Positions 63, 66, 69, 73, 102, 105, 108, and 112 each coordinate [4Fe-4S] cluster.

This sequence belongs to the complex I 23 kDa subunit family. As to quaternary structure, NDH-1 is composed of 14 different subunits. Subunits NuoA, H, J, K, L, M, N constitute the membrane sector of the complex. The cofactor is [4Fe-4S] cluster.

It is found in the cell inner membrane. It carries out the reaction a quinone + NADH + 5 H(+)(in) = a quinol + NAD(+) + 4 H(+)(out). Its function is as follows. NDH-1 shuttles electrons from NADH, via FMN and iron-sulfur (Fe-S) centers, to quinones in the respiratory chain. The immediate electron acceptor for the enzyme in this species is believed to be ubiquinone. Couples the redox reaction to proton translocation (for every two electrons transferred, four hydrogen ions are translocated across the cytoplasmic membrane), and thus conserves the redox energy in a proton gradient. The polypeptide is NADH-quinone oxidoreductase subunit I (Paramagnetospirillum magneticum (strain ATCC 700264 / AMB-1) (Magnetospirillum magneticum)).